A 406-amino-acid polypeptide reads, in one-letter code: Serine hydroxymethyltransferase (406 aa).

Residues L111 and G115–L117 each bind (6S)-5,6,7,8-tetrahydrofolate. The residue at position 220 (K220) is an N6-(pyridoxal phosphate)lysine.

It belongs to the SHMT family. In terms of assembly, homodimer. The cofactor is pyridoxal 5'-phosphate.

The protein localises to the cytoplasm. The catalysed reaction is (6R)-5,10-methylene-5,6,7,8-tetrahydrofolate + glycine + H2O = (6S)-5,6,7,8-tetrahydrofolate + L-serine. It functions in the pathway one-carbon metabolism; tetrahydrofolate interconversion. The protein operates within amino-acid biosynthesis; glycine biosynthesis; glycine from L-serine: step 1/1. Catalyzes the reversible interconversion of serine and glycine with tetrahydrofolate (THF) serving as the one-carbon carrier. This reaction serves as the major source of one-carbon groups required for the biosynthesis of purines, thymidylate, methionine, and other important biomolecules. Also exhibits THF-independent aldolase activity toward beta-hydroxyamino acids, producing glycine and aldehydes, via a retro-aldol mechanism. This Mycoplasma pneumoniae (strain ATCC 29342 / M129 / Subtype 1) (Mycoplasmoides pneumoniae) protein is Serine hydroxymethyltransferase.